A 550-amino-acid chain; its full sequence is Coiled-coil domain-containing protein 102A (550 aa).

2 disordered regions span residues 1 to 69 (MSHG…DGDW) and 138 to 247 (GARR…ATEE). 3 positions are modified to phosphoserine: Ser12, Ser26, and Ser28. Positions 37-61 (SLPPTPPSGTPSPGPPPALPLPPAP) are enriched in pro residues. Residues 72–161 (REELRLRELE…ARGRELARLR (90 aa)) are a coiled coil. Composition is skewed to basic and acidic residues over residues 138–159 (GARR…ELAR) and 169–188 (QTRD…DVGS). Coiled coils occupy residues 263–396 (QKVL…RRQT) and 427–518 (KLKK…NAPL). 2 disordered regions span residues 472–497 (DELD…QSEN) and 509–550 (LRRQ…IQVA). Over residues 530–550 (EEAEDGTSDLDEDEDLQIQVA) the composition is skewed to acidic residues. Phosphoserine is present on Ser537.

The sequence is that of Coiled-coil domain-containing protein 102A (CCDC102A) from Homo sapiens (Human).